Consider the following 159-residue polypeptide: ATP synthase subunit b 1 (159 aa).

Residues 5–25 (FWAFIGLILFLALLFYFKVPA) form a helical membrane-spanning segment.

It belongs to the ATPase B chain family. In terms of assembly, F-type ATPases have 2 components, F(1) - the catalytic core - and F(0) - the membrane proton channel. F(1) has five subunits: alpha(3), beta(3), gamma(1), delta(1), epsilon(1). F(0) has three main subunits: a(1), b(2) and c(10-14). The alpha and beta chains form an alternating ring which encloses part of the gamma chain. F(1) is attached to F(0) by a central stalk formed by the gamma and epsilon chains, while a peripheral stalk is formed by the delta and b chains.

Its subcellular location is the cell inner membrane. F(1)F(0) ATP synthase produces ATP from ADP in the presence of a proton or sodium gradient. F-type ATPases consist of two structural domains, F(1) containing the extramembraneous catalytic core and F(0) containing the membrane proton channel, linked together by a central stalk and a peripheral stalk. During catalysis, ATP synthesis in the catalytic domain of F(1) is coupled via a rotary mechanism of the central stalk subunits to proton translocation. Its function is as follows. Component of the F(0) channel, it forms part of the peripheral stalk, linking F(1) to F(0). The chain is ATP synthase subunit b 1 from Bartonella bacilliformis (strain ATCC 35685 / KC583 / Herrer 020/F12,63).